Here is an 811-residue protein sequence, read N- to C-terminus: Glycerol-3-phosphate acyltransferase (811 aa).

The short motif at 303–308 (HRSHMD) is the HXXXXD motif element.

Belongs to the GPAT/DAPAT family.

It is found in the cell inner membrane. The catalysed reaction is sn-glycerol 3-phosphate + an acyl-CoA = a 1-acyl-sn-glycero-3-phosphate + CoA. Its pathway is phospholipid metabolism; CDP-diacylglycerol biosynthesis; CDP-diacylglycerol from sn-glycerol 3-phosphate: step 1/3. This Haemophilus ducreyi (strain 35000HP / ATCC 700724) protein is Glycerol-3-phosphate acyltransferase.